Reading from the N-terminus, the 169-residue chain is Lipoprotein signal peptidase (169 aa).

The next 4 membrane-spanning stretches (helical) occupy residues 4 to 24 (PICSTGLRWLWLAVVVVILDI), 29 to 49 (WVMAHFALYESVPLIPFFNLT), 70 to 90 (WFFAGIAIGISVVLMVMMYRS), and 101 to 121 (YALIIGGALGNLYDRLVHGAV). Catalysis depends on residues aspartate 123 and aspartate 141. The helical transmembrane segment at 137–157 (FNLADVAISIGAVLVIFEGFL) threads the bilayer.

This sequence belongs to the peptidase A8 family.

The protein resides in the cell inner membrane. The enzyme catalyses Release of signal peptides from bacterial membrane prolipoproteins. Hydrolyzes -Xaa-Yaa-Zaa-|-(S,diacylglyceryl)Cys-, in which Xaa is hydrophobic (preferably Leu), and Yaa (Ala or Ser) and Zaa (Gly or Ala) have small, neutral side chains.. Its pathway is protein modification; lipoprotein biosynthesis (signal peptide cleavage). In terms of biological role, this protein specifically catalyzes the removal of signal peptides from prolipoproteins. The sequence is that of Lipoprotein signal peptidase from Yersinia pseudotuberculosis serotype O:1b (strain IP 31758).